A 496-amino-acid chain; its full sequence is Guanosine-5'-triphosphate,3'-diphosphate pyrophosphatase (496 aa).

Belongs to the GppA/Ppx family. GppA subfamily.

The catalysed reaction is guanosine 3'-diphosphate 5'-triphosphate + H2O = guanosine 3',5'-bis(diphosphate) + phosphate + H(+). Its pathway is purine metabolism; ppGpp biosynthesis; ppGpp from GTP: step 2/2. Its function is as follows. Catalyzes the conversion of pppGpp to ppGpp. Guanosine pentaphosphate (pppGpp) is a cytoplasmic signaling molecule which together with ppGpp controls the 'stringent response', an adaptive process that allows bacteria to respond to amino acid starvation, resulting in the coordinated regulation of numerous cellular activities. This Aeromonas hydrophila subsp. hydrophila (strain ATCC 7966 / DSM 30187 / BCRC 13018 / CCUG 14551 / JCM 1027 / KCTC 2358 / NCIMB 9240 / NCTC 8049) protein is Guanosine-5'-triphosphate,3'-diphosphate pyrophosphatase.